Here is a 29-residue protein sequence, read N- to C-terminus: Conotoxin pr6a (29 aa).

Intrachain disulfides connect Cys-2/Cys-20, Cys-9/Cys-24, and Cys-19/Cys-28.

As to expression, expressed by the venom duct.

The protein localises to the secreted. Functionally, intraperitoneal injection into fish (1 nmol) provokes hyperactivity and erratic swimming in various directions after 14 minutes. The sequence is that of Conotoxin pr6a from Conus parius (Cone snail).